Reading from the N-terminus, the 554-residue chain is 3-(3-hydroxy-phenyl)propionate/3-hydroxycinnamic acid hydroxylase (554 aa).

FAD contacts are provided by residues 17–46 (QVAI…VVEK) and 285–295 (FRIDRVLLAGD).

It belongs to the PheA/TfdB FAD monooxygenase family. FAD is required as a cofactor.

It catalyses the reaction 3-(3-hydroxyphenyl)propanoate + NADH + O2 + H(+) = 3-(2,3-dihydroxyphenyl)propanoate + NAD(+) + H2O. It carries out the reaction (2E)-3-(3-hydroxyphenyl)prop-2-enoate + NADH + O2 + H(+) = (2E)-3-(2,3-dihydroxyphenyl)prop-2-enoate + NAD(+) + H2O. The protein operates within aromatic compound metabolism; 3-phenylpropanoate degradation. Catalyzes the insertion of one atom of molecular oxygen into position 2 of the phenyl ring of 3-(3-hydroxyphenyl)propionate (3-HPP) and hydroxycinnamic acid (3HCI). In Escherichia coli O81 (strain ED1a), this protein is 3-(3-hydroxy-phenyl)propionate/3-hydroxycinnamic acid hydroxylase.